The primary structure comprises 933 residues: MFSAIAKRVFGTRNDRALKRLRKRIEAINAHEPELQKLSDEQLQAKTDAFKARLAQGETLDDLLEEAFAVVREASRRVLGLRHFDVQLLGAMVLHDGNISEMKTGEGKTLVATLAVYLNALTGRGVHVVTVNDYLARRDAEWMGRLYRFLGMEVGVVVPRQPREEKVAAYQADITYGTNNEFGFDYLRDNMAFRKEDKVQRDLYYALVDEVDSILIDEARTPLIISGPAEQAGELYEAMSRLVPRLQAQKPEERPEENPELGPGDYYVDEKARQVYLTEGGHDRAEELLREEGLIGENDSLYDARNINVVHHLNAALRAHTLYERDVHYLIRDNQVVIVDEFTGRAMPGRRWSEGLHQAVEAKEGLPIQAENQTLASITFQNYFRLYDKLAGMTGTADTEAFEFQHIYGLEVLSIPTHRPMVRDDAHDLVYRTADEKYEAIIADIRDCVQRDQPVLVGTTSIEASERLSKALKDAGVEHNVLNAKHNESEAQIIADAGRPGTVTIATNMAGRGTDIVLGGNLDQELAELGEDPDPAEVERRKAEWQDRHDRVVNAGGLHVIGTERHESRRIDNQLRGRSGRQGDPGSSRFYLSLEDSLLRIFASERMSGMLEKLGMQHGEAIESGMVSRVIENAQRKVEAHNFDMRKHLLEFDDVANDQRKVVYEQRNELLEADDVAETVDAIRQDVVEKVISEHIPPGSIDEQWDVPGLERTLKEEFGQELPIQRWLDDEDDLHEETLRERIQGEIEKAYRAKEAEAGASVVRHFEKAVMLQVLDKHWKEHLAAMDYLRQGVGLRGYAQRNPKQEFKKDAFAMFQEMLEGLKRDAVGVLLRVQVRAEEDVEAVEEQRRQEAERMQMRHAAPASAAAGAVAAGSGAAGAAAAEGDSAPTGGAQQQSAGGRGQETVAREGPKVGRNESCPCGSGKKYKHCCGKL.

Residues glutamine 87, 105-109 (GEGKT), and aspartate 515 each bind ATP. Disordered regions lie at residues 567-588 (ESRR…PGSS), 840-861 (DVEA…RHAA), and 880-933 (AAAE…CGKL). Residues 845 to 856 (EEQRRQEAERMQ) show a composition bias toward basic and acidic residues. The span at 880–897 (AAAEGDSAPTGGAQQQSA) shows a compositional bias: low complexity. Residues 905–914 (VAREGPKVGR) show a composition bias toward basic and acidic residues. Zn(2+)-binding residues include cysteine 918, cysteine 920, cysteine 929, and cysteine 930. The segment covering 924–933 (KKYKHCCGKL) has biased composition (basic residues).

Belongs to the SecA family. Monomer and homodimer. Part of the essential Sec protein translocation apparatus which comprises SecA, SecYEG and auxiliary proteins SecDF-YajC and YidC. The cofactor is Zn(2+).

The protein localises to the cell inner membrane. It is found in the cytoplasm. The catalysed reaction is ATP + H2O + cellular proteinSide 1 = ADP + phosphate + cellular proteinSide 2.. In terms of biological role, part of the Sec protein translocase complex. Interacts with the SecYEG preprotein conducting channel. Has a central role in coupling the hydrolysis of ATP to the transfer of proteins into and across the cell membrane, serving both as a receptor for the preprotein-SecB complex and as an ATP-driven molecular motor driving the stepwise translocation of polypeptide chains across the membrane. In Halorhodospira halophila (strain DSM 244 / SL1) (Ectothiorhodospira halophila (strain DSM 244 / SL1)), this protein is Protein translocase subunit SecA.